The chain runs to 227 residues: ATP synthase F(0) complex subunit a (227 aa).

Transmembrane regions (helical) follow at residues 14 to 34 (FLGI…FPSP), 69 to 89 (WAMI…LGLL), 98 to 118 (QLSM…LIGM), 139 to 159 (IPIL…ALGV), 165 to 185 (LTAG…MLSI), and 189 to 209 (IATL…AVAM).

This sequence belongs to the ATPase A chain family. As to quaternary structure, component of the ATP synthase complex composed at least of ATP5F1A/subunit alpha, ATP5F1B/subunit beta, ATP5MC1/subunit c (homooctomer), MT-ATP6/subunit a, MT-ATP8/subunit 8, ATP5ME/subunit e, ATP5MF/subunit f, ATP5MG/subunit g, ATP5MK/subunit k, ATP5MJ/subunit j, ATP5F1C/subunit gamma, ATP5F1D/subunit delta, ATP5F1E/subunit epsilon, ATP5PF/subunit F6, ATP5PB/subunit b, ATP5PD/subunit d, ATP5PO/subunit OSCP. ATP synthase complex consists of a soluble F(1) head domain (subunits alpha(3) and beta(3)) - the catalytic core - and a membrane F(0) domain - the membrane proton channel (subunits c, a, 8, e, f, g, k and j). These two domains are linked by a central stalk (subunits gamma, delta, and epsilon) rotating inside the F1 region and a stationary peripheral stalk (subunits F6, b, d, and OSCP). Interacts with DNAJC30; interaction is direct.

The protein resides in the mitochondrion inner membrane. The catalysed reaction is H(+)(in) = H(+)(out). In terms of biological role, subunit a, of the mitochondrial membrane ATP synthase complex (F(1)F(0) ATP synthase or Complex V) that produces ATP from ADP in the presence of a proton gradient across the membrane which is generated by electron transport complexes of the respiratory chain. ATP synthase complex consist of a soluble F(1) head domain - the catalytic core - and a membrane F(1) domain - the membrane proton channel. These two domains are linked by a central stalk rotating inside the F(1) region and a stationary peripheral stalk. During catalysis, ATP synthesis in the catalytic domain of F(1) is coupled via a rotary mechanism of the central stalk subunits to proton translocation. With the subunit c (ATP5MC1), forms the proton-conducting channel in the F(0) domain, that contains two crucial half-channels (inlet and outlet) that facilitate proton movement from the mitochondrial intermembrane space (IMS) into the matrix. Protons are taken up via the inlet half-channel and released through the outlet half-channel, following a Grotthuss mechanism. The protein is ATP synthase F(0) complex subunit a of Polypterus ornatipinnis (Ornate bichir).